Consider the following 82-residue polypeptide: Small ribosomal subunit protein uS17 (82 aa).

It belongs to the universal ribosomal protein uS17 family. In terms of assembly, part of the 30S ribosomal subunit.

Its function is as follows. One of the primary rRNA binding proteins, it binds specifically to the 5'-end of 16S ribosomal RNA. This is Small ribosomal subunit protein uS17 from Shewanella sp. (strain W3-18-1).